The sequence spans 176 residues: Tumor necrosis factor receptor superfamily member 23 (176 aa).

The signal sequence occupies residues 1-29; it reads MVTFSHVSSLSHWFLLLLLLNLFLPVIFA. 3 TNFR-Cys repeats span residues 37-72, 74-114, and 115-155; these read NCPD…QGQC, KCHP…DRKC, and ECQI…NTVC. 9 disulfides stabilise this stretch: C38–C49, C50–C63, C53–C72, C75–C90, C93–C106, C96–C114, C116–C131, C134–C147, and C137–C155. An N-linked (GlcNAc...) asparagine glycan is attached at N148. Residue C155 is the site of GPI-anchor amidated cysteine attachment. Positions 156–176 are cleaved as a propeptide — removed in mature form; the sequence is SSSVSNPRNWLFLLMLIVFCI.

Ubiquitous.

The protein resides in the cell membrane. Receptor for the cytotoxic ligand TRAIL. Lacks a cytoplasmic death domain and hence is not capable of inducing apoptosis. May protect cells against TRAIL mediated apoptosis through ligand competition. Cannot induce the NF-kappa-B pathway. The polypeptide is Tumor necrosis factor receptor superfamily member 23 (Tnfrsf23) (Mus musculus (Mouse)).